The sequence spans 364 residues: Aminomethyltransferase (364 aa).

It belongs to the GcvT family. The glycine cleavage system is composed of four proteins: P, T, L and H.

The catalysed reaction is N(6)-[(R)-S(8)-aminomethyldihydrolipoyl]-L-lysyl-[protein] + (6S)-5,6,7,8-tetrahydrofolate = N(6)-[(R)-dihydrolipoyl]-L-lysyl-[protein] + (6R)-5,10-methylene-5,6,7,8-tetrahydrofolate + NH4(+). Functionally, the glycine cleavage system catalyzes the degradation of glycine. This chain is Aminomethyltransferase, found in Enterobacter sp. (strain 638).